A 458-amino-acid polypeptide reads, in one-letter code: GTPase Der (458 aa).

EngA-type G domains are found at residues 4–169 (PSIA…PKDL) and 178–353 (IMMS…TQHR). GTP is bound by residues 10–17 (GRPNVGKS), 57–61 (DTGGL), 120–123 (NKCE), 184–191 (GRPNVGKS), 231–235 (DTAGI), and 296–299 (NKWD). One can recognise a KH-like domain in the interval 354 to 439 (RRVTTSVVNE…PIILLWRGKQ (86 aa)).

It belongs to the TRAFAC class TrmE-Era-EngA-EngB-Septin-like GTPase superfamily. EngA (Der) GTPase family. Associates with the 50S ribosomal subunit.

Functionally, GTPase that plays an essential role in the late steps of ribosome biogenesis. This Prochlorococcus marinus subsp. pastoris (strain CCMP1986 / NIES-2087 / MED4) protein is GTPase Der.